Consider the following 183-residue polypeptide: Streptavidin (183 aa).

The N-terminal stretch at 1–24 is a signal peptide; that stretch reads MRKIVVAAIAVSLTTVSITASASA. An Avidin-like domain is found at 37-159; it reads AEAGITGTWY…GHDTFTKVKP (123 aa). 2 residues coordinate biotin: Y67 and Y78. A Cell attachment site; atypical motif is present at residues 83 to 85; the sequence is RYD. W116, W132, and W144 together coordinate biotin.

It belongs to the avidin/streptavidin family. Homotetramer.

It is found in the secreted. The biological function of streptavidin is not known. Forms a strong non-covalent specific complex with biotin (one molecule of biotin per subunit of streptavidin). The protein is Streptavidin of Streptomyces avidinii.